We begin with the raw amino-acid sequence, 271 residues long: Formamidopyrimidine-DNA glycosylase (271 aa).

The Schiff-base intermediate with DNA role is filled by P2. Catalysis depends on E3, which acts as the Proton donor. The active-site Proton donor; for beta-elimination activity is the K57. Residues H90, R109, and K151 each contribute to the DNA site. Residues H236 to Q270 form an FPG-type zinc finger. R260 acts as the Proton donor; for delta-elimination activity in catalysis.

This sequence belongs to the FPG family. As to quaternary structure, monomer. It depends on Zn(2+) as a cofactor.

The enzyme catalyses Hydrolysis of DNA containing ring-opened 7-methylguanine residues, releasing 2,6-diamino-4-hydroxy-5-(N-methyl)formamidopyrimidine.. It catalyses the reaction 2'-deoxyribonucleotide-(2'-deoxyribose 5'-phosphate)-2'-deoxyribonucleotide-DNA = a 3'-end 2'-deoxyribonucleotide-(2,3-dehydro-2,3-deoxyribose 5'-phosphate)-DNA + a 5'-end 5'-phospho-2'-deoxyribonucleoside-DNA + H(+). Its function is as follows. Involved in base excision repair of DNA damaged by oxidation or by mutagenic agents. Acts as a DNA glycosylase that recognizes and removes damaged bases. Has a preference for oxidized purines, such as 7,8-dihydro-8-oxoguanine (8-oxoG). Has AP (apurinic/apyrimidinic) lyase activity and introduces nicks in the DNA strand. Cleaves the DNA backbone by beta-delta elimination to generate a single-strand break at the site of the removed base with both 3'- and 5'-phosphates. This chain is Formamidopyrimidine-DNA glycosylase, found in Shewanella pealeana (strain ATCC 700345 / ANG-SQ1).